A 338-amino-acid polypeptide reads, in one-letter code: Nicotinate-nucleotide--dimethylbenzimidazole phosphoribosyltransferase (338 aa).

Residue Glu-305 is the Proton acceptor of the active site.

This sequence belongs to the CobT family.

It carries out the reaction 5,6-dimethylbenzimidazole + nicotinate beta-D-ribonucleotide = alpha-ribazole 5'-phosphate + nicotinate + H(+). The protein operates within nucleoside biosynthesis; alpha-ribazole biosynthesis; alpha-ribazole from 5,6-dimethylbenzimidazole: step 1/2. Functionally, catalyzes the synthesis of alpha-ribazole-5'-phosphate from nicotinate mononucleotide (NAMN) and 5,6-dimethylbenzimidazole (DMB). This is Nicotinate-nucleotide--dimethylbenzimidazole phosphoribosyltransferase from Novosphingobium aromaticivorans (strain ATCC 700278 / DSM 12444 / CCUG 56034 / CIP 105152 / NBRC 16084 / F199).